The sequence spans 117 residues: uncharacterized protein (117 aa).

This is an uncharacterized protein from Acheta domesticus (House cricket).